Consider the following 244-residue polypeptide: MSIDCNVVENVRYSRVLLKVSGEALAGERGFGFDQDVIGKLSCDLKKVRESGVELCIVVGGGNIFRGSSTSFGFERASNDYVGMLATMINALALQNSLEDMGIASRVLSAIPMTAVCETYIRRRAIRHLEKGRVVICAAGIGSPFFTTDTAAVLRSIEMRCDAIFKGTQVDGVYSSDPKKDCSATRYDKISYHDLLASDLKIMDAAAVSLARENSIPIIVFDLGKENAFSEVMKGRGTFTTISG.

Residue 19–22 coordinates ATP; the sequence is KVSG. Positions 27 to 32 are involved in allosteric activation by GTP; the sequence is GERGFG. Gly-61 contacts UMP. Gly-62 and Arg-66 together coordinate ATP. UMP contacts are provided by residues Asp-80 and 141–148; that span reads IGSPFFTT. Positions 168, 169, 174, and 177 each coordinate ATP.

Belongs to the UMP kinase family. In terms of assembly, homohexamer.

Its subcellular location is the cytoplasm. It carries out the reaction UMP + ATP = UDP + ADP. It participates in pyrimidine metabolism; CTP biosynthesis via de novo pathway; UDP from UMP (UMPK route): step 1/1. Its activity is regulated as follows. Allosterically activated by GTP. Inhibited by UTP. Catalyzes the reversible phosphorylation of UMP to UDP. The chain is Uridylate kinase from Anaplasma phagocytophilum (strain HZ).